The sequence spans 361 residues: MNKLALYCRSGFEKELAAEITEKATALGVFGFARVVENSGYVIFECYQIGEADLLARKITFSQLIFARQLIVVSDLISNLSVQDRISPIIEYYRQQEKILNLKQSSDIWVETADTNEAKTRAAFCRKFTVPLRQAFRKQGWLQAKNKKSGITLHIFFTQSNSCYIGYSYNNNHAEHIMGIPRLKFPAEAPSRSTLKLEEAILYFIPPNQEATRFNENKYAVDLGACPGGWTYQLVRRGVFVYAVDHGKMATSLHETGRIEHCAEDGFKFRPPKHCKIDWLVCDMVEQPRRIADLISQWLVKGWCKETIFNLKLPMKKRYFEVKRCLQQIKERLNEQHISFQIQAKHLYHDREEITVYIRLM.

Residues S193, 226-229 (CPGG), D245, D265, and D283 each bind S-adenosyl-L-methionine. Residue K312 is the Proton acceptor of the active site.

The protein belongs to the class I-like SAM-binding methyltransferase superfamily. RNA methyltransferase RlmE family. RlmM subfamily. Monomer.

The protein localises to the cytoplasm. It carries out the reaction cytidine(2498) in 23S rRNA + S-adenosyl-L-methionine = 2'-O-methylcytidine(2498) in 23S rRNA + S-adenosyl-L-homocysteine + H(+). Its function is as follows. Catalyzes the 2'-O-methylation at nucleotide C2498 in 23S rRNA. The protein is Ribosomal RNA large subunit methyltransferase M of Histophilus somni (strain 2336) (Haemophilus somnus).